A 112-amino-acid chain; its full sequence is MEPGRFRNRVKILTFTTSRDPSGQPVESWTGGNPVPAEVKGISGREQLSGGAETAQATIRVWMRFRSELNASSRLEVLSGPYKGQVLNIIGPPVANATGTRLEILCKTGAEK.

Belongs to the Caudoviricetes gp7/gp16 head completion protein family. In terms of assembly, interacts with the connector protein gp15. Interacts with the head-tail joining protein gp17.

It is found in the virion. Its function is as follows. Functions as a stopper that is part of the head-tail connector and that locks the viral DNA in the capsid. Following tail attachment to the entry receptor, seems to open by a diaphragm-like motion, allowing the genome to exit the capsid through the tail tube to the host cell. During assembly, functions as a docking platform which the preassembled tail tapered by the head-tail joining protein gp17 can bind to. The polypeptide is Head completion protein gp7 (Escherichia coli (Bacteriophage HK97)).